The primary structure comprises 194 residues: Thymidylate kinase (194 aa).

7–14 (GVDCVGKS) lines the ATP pocket.

This sequence belongs to the thymidylate kinase family.

The enzyme catalyses dTMP + ATP = dTDP + ADP. Phosphorylation of dTMP to form dTDP in both de novo and salvage pathways of dTTP synthesis. The protein is Thymidylate kinase of Campylobacter lari (strain RM2100 / D67 / ATCC BAA-1060).